We begin with the raw amino-acid sequence, 208 residues long: Ras-related protein Rab-6B (208 aa).

GTP-binding positions include 20–27 (GEQSVGKT), Thr-45, 68–72 (DTAGQ), and 126–129 (NKTD). An Effector region motif is present at residues 42–50 (YQATIGIDF). Residues Cys-206 and Cys-208 are each lipidated (S-geranylgeranyl cysteine). At Cys-208 the chain carries Cysteine methyl ester.

The protein belongs to the small GTPase superfamily. Rab family. As to quaternary structure, interacts (GTP-bound) with BICD1 (via C-terminus); the interaction is direct. Interacts (GDP-bound) with DYNLRB1. Interacts (GTP-bound) with APBA1/MINT1. Interacts (GTP-bound) with VPS13B.

Its subcellular location is the golgi apparatus membrane. The protein resides in the endoplasmic reticulum-Golgi intermediate compartment. It is found in the cytoplasmic vesicle. The catalysed reaction is GTP + H2O = GDP + phosphate + H(+). Regulated by guanine nucleotide exchange factors (GEFs) which promote the exchange of bound GDP for free GTP, GTPase activating proteins (GAPs) which increase the GTP hydrolysis activity, and GDP dissociation inhibitors which inhibit the dissociation of the nucleotide from the GTPase. Functionally, the small GTPases Rab are key regulators of intracellular membrane trafficking, from the formation of transport vesicles to their fusion with membranes. Rabs cycle between active GTP-bound and inactive GDP-bound states. In their active state, drive transport of vesicular carriers from donor organelles to acceptor organelles to regulate the membrane traffic that maintains organelle identity and morphology. Recruits VPS13B to the Golgi membrane. Regulates the compacted morphology of the Golgi. Seems to have a role in retrograde membrane traffic at the level of the Golgi complex. May function in retrograde transport in neuronal cells. Plays a role in neuron projection development. This Bos taurus (Bovine) protein is Ras-related protein Rab-6B (RAB6B).